Consider the following 513-residue polypeptide: Putative ATP-dependent RNA helicase QP509L (513 aa).

The 153-residue stretch at 110 to 262 folds into the Helicase ATP-binding domain; it reads KKLLSPYGRF…KIIIHHLGQP (153 aa). Residue 123-130 participates in ATP binding; that stretch reads LNTGLGKT. The DEAH box motif lies at 215–218; sequence DEAH.

It belongs to the DEAD box helicase family. DEAH subfamily.

It carries out the reaction ATP + H2O = ADP + phosphate + H(+). The sequence is that of Putative ATP-dependent RNA helicase QP509L from Ornithodoros (relapsing fever ticks).